Here is a 612-residue protein sequence, read N- to C-terminus: Zinc metalloproteinase-disintegrin-like berythractivase (612 aa).

Positions 1 to 20 (MIQVLLVIICLEAFPYQGSS) are cleaved as a signal peptide. The propeptide occupies 21–187 (IILESGNVND…EPIKKASLLN (167 aa)). The region spanning 200–396 (KYVEFVVVLD…NRPQCLLNKP (197 aa)) is the Peptidase M12B domain. A Ca(2+)-binding site is contributed by Glu-203. A glycan (N-linked (GlcNAc...) asparagine) is linked at Asn-260. A Ca(2+)-binding site is contributed by Asp-287. 3 disulfide bridges follow: Cys-311/Cys-391, Cys-351/Cys-375, and Cys-353/Cys-358. His-336 serves as a coordination point for Zn(2+). Residue Glu-337 is part of the active site. Positions 340 and 346 each coordinate Zn(2+). An N-linked (GlcNAc...) asparagine glycan is attached at Asn-348. Residue Asn-374 is glycosylated (N-linked (GlcNAc...) asparagine). Ca(2+) is bound by residues Cys-391, Asn-394, Val-406, Asn-409, Leu-411, Glu-413, Glu-416, and Asp-419. Positions 404–490 (PPVCGNELLE…DCPMDDFQRN (87 aa)) constitute a Disintegrin domain. 14 cysteine pairs are disulfide-bonded: Cys-407–Cys-436, Cys-418–Cys-431, Cys-420–Cys-426, Cys-430–Cys-453, Cys-444–Cys-450, Cys-449–Cys-475, Cys-462–Cys-482, Cys-469–Cys-501, Cys-494–Cys-506, Cys-513–Cys-563, Cys-528–Cys-574, Cys-541–Cys-551, Cys-558–Cys-600, and Cys-594–Cys-605. Asn-432 is a glycosylation site (N-linked (GlcNAc...) asparagine). A D/ECD-tripeptide motif is present at residues 468 to 470 (DCD). Positions 470, 471, 473, and 485 each coordinate Ca(2+).

Belongs to the venom metalloproteinase (M12B) family. P-III subfamily. P-IIIa sub-subfamily. In terms of assembly, monomer. Zn(2+) serves as cofactor. In terms of processing, highly glycosylated. As to expression, expressed by the venom gland.

It localises to the secreted. With respect to regulation, inhibited by EDTA and o-phenanthroline. Not inhibited by PMSF, benzamidine, irreversible serine-proteinase inhibitors and cysteine proteinase inhibitor E-64. In terms of biological role, potent activator of prothrombin (F2). Does not elicit any hemorrhagic response. Barely inhibits collagen-induced platelet aggregation. Binds neither collagen, nor the jararhagin monoclonal antibody MAJar3. Hydrolyzes the Aalpha-chain of fibrin and fibrinogen, without affecting the Bbeta- and gamma-chains. Is capable of triggering endothelial pro-inflammatory and procoagulant cell responses, but fails to trigger apoptosis. Induces von Willebrand factor release, and the expression of both ICAM1 and E-selectin (SELE) (without increase in VCAM1) in endothelial cells (HUVEC). Is also able to up-regulate the synthesis of the coagulation factor TF (F3). Enhances nitric oxide (NO) generation, prostacyclin production and interleukin-8 release. This Bothrops erythromelas (Caatinga lance head) protein is Zinc metalloproteinase-disintegrin-like berythractivase.